The following is a 708-amino-acid chain: tRNA 5-methylaminomethyl-2-thiouridine biosynthesis bifunctional protein MnmC (708 aa).

The interval 1 to 278 (MTAEPNKPCQ…ERQVLRQQDA (278 aa)) is tRNA (mnm(5)s(2)U34)-methyltransferase. The tract at residues 301–708 (IGGGLASAHL…LRKLLKGKAL (408 aa)) is FAD-dependent cmnm(5)s(2)U34 oxidoreductase.

It in the N-terminal section; belongs to the methyltransferase superfamily. tRNA (mnm(5)s(2)U34)-methyltransferase family. In the C-terminal section; belongs to the DAO family. It depends on FAD as a cofactor.

Its subcellular location is the cytoplasm. The catalysed reaction is 5-aminomethyl-2-thiouridine(34) in tRNA + S-adenosyl-L-methionine = 5-methylaminomethyl-2-thiouridine(34) in tRNA + S-adenosyl-L-homocysteine + H(+). In terms of biological role, catalyzes the last two steps in the biosynthesis of 5-methylaminomethyl-2-thiouridine (mnm(5)s(2)U) at the wobble position (U34) in tRNA. Catalyzes the FAD-dependent demodification of cmnm(5)s(2)U34 to nm(5)s(2)U34, followed by the transfer of a methyl group from S-adenosyl-L-methionine to nm(5)s(2)U34, to form mnm(5)s(2)U34. The protein is tRNA 5-methylaminomethyl-2-thiouridine biosynthesis bifunctional protein MnmC of Shewanella baltica (strain OS195).